Reading from the N-terminus, the 95-residue chain is Embryonic abundant protein 1 (95 aa).

Over residues Met-1–Arg-10 the composition is skewed to polar residues. Positions Met-1–Ser-95 are disordered. Basic and acidic residues-rich tracts occupy residues Ala-40–Arg-64 and Gly-75–Ser-95.

This sequence belongs to the small hydrophilic plant seed protein family. In terms of tissue distribution, expressed in dry seeds and immature embryos.

Functionally, em protein may act as a cytoplasm protectant during desiccation. The sequence is that of Embryonic abundant protein 1 (EMP1) from Oryza sativa subsp. japonica (Rice).